The chain runs to 941 residues: Protein translocase subunit SecA (941 aa).

ATP-binding positions include Q87, 105-109 (GEGKT), and D524. The segment at 871–919 (DEQPPMPAMEAHKLDPNTGEDQVAQAQSGLAPVAPAKRDPANPATWGKV) is disordered. The Zn(2+) site is built by C925, C927, C936, and H937.

Belongs to the SecA family. Monomer and homodimer. Part of the essential Sec protein translocation apparatus which comprises SecA, SecYEG and auxiliary proteins SecDF-YajC and YidC. It depends on Zn(2+) as a cofactor.

It is found in the cell inner membrane. The protein localises to the cytoplasm. It catalyses the reaction ATP + H2O + cellular proteinSide 1 = ADP + phosphate + cellular proteinSide 2.. Functionally, part of the Sec protein translocase complex. Interacts with the SecYEG preprotein conducting channel. Has a central role in coupling the hydrolysis of ATP to the transfer of proteins into and across the cell membrane, serving both as a receptor for the preprotein-SecB complex and as an ATP-driven molecular motor driving the stepwise translocation of polypeptide chains across the membrane. The sequence is that of Protein translocase subunit SecA from Afipia carboxidovorans (strain ATCC 49405 / DSM 1227 / KCTC 32145 / OM5) (Oligotropha carboxidovorans).